The following is a 155-amino-acid chain: Small ribosomal subunit protein uS7c (155 aa).

The protein belongs to the universal ribosomal protein uS7 family. As to quaternary structure, part of the 30S ribosomal subunit.

The protein localises to the plastid. The protein resides in the chloroplast. One of the primary rRNA binding proteins, it binds directly to 16S rRNA where it nucleates assembly of the head domain of the 30S subunit. This Coelogyne cristata (Orchid) protein is Small ribosomal subunit protein uS7c (rps7).